We begin with the raw amino-acid sequence, 569 residues long: MRASQWFLVTQKETPNDAEIASHQLMLRSGMIRKLGSGLYTWMPLGLRVLRKVENIVREEMNKTHAMELLMPSVQPAELWQETGRWETFGGQLLTMKDSNQREYCFGPTHEEVITDIMRNELQSYKQLPVNFYQIQTKFRDEIRPRFGVMRAREFIMKDAYSFHLSIESLQETYKDMYQAYCRIFDRMGLKYRAVEADTGAIGGSASHEFQVLAESGEDLIFYSDASDYAANIEQATSLKPPKANQACNETITLVDTPNQKTIDEVASFLGIASNQTIKTLIVKGKEHPMVALVLRGDDELNEVKATKHPLVHSPLSFIDEELILKTLKTPLGSIGPIQLNIPVIVDHHALAMPSFVCGANQADKHFINAAWERDAKYDDAYDLRNVKEGDPSPDGRGMLHCCRGIEVGHVFQLGDKYAKAMNASVINEQGQLQTMIMGCYGLGITRVVAAAIEQHHDEHGIIWPQALAPFQVNIIPLNGARSQTVKEQAESLYQQLKSHGIDVLLDDRNERAGVLFADNDLIGIPHRLVVSERNLEQGCIEYKSRTSSETQLINLDKVVNFIIELINK.

Belongs to the class-II aminoacyl-tRNA synthetase family. ProS type 1 subfamily. As to quaternary structure, homodimer.

It localises to the cytoplasm. It catalyses the reaction tRNA(Pro) + L-proline + ATP = L-prolyl-tRNA(Pro) + AMP + diphosphate. Its function is as follows. Catalyzes the attachment of proline to tRNA(Pro) in a two-step reaction: proline is first activated by ATP to form Pro-AMP and then transferred to the acceptor end of tRNA(Pro). As ProRS can inadvertently accommodate and process non-cognate amino acids such as alanine and cysteine, to avoid such errors it has two additional distinct editing activities against alanine. One activity is designated as 'pretransfer' editing and involves the tRNA(Pro)-independent hydrolysis of activated Ala-AMP. The other activity is designated 'posttransfer' editing and involves deacylation of mischarged Ala-tRNA(Pro). The misacylated Cys-tRNA(Pro) is not edited by ProRS. This chain is Proline--tRNA ligase, found in Legionella pneumophila (strain Corby).